The sequence spans 167 residues: Outer envelope pore protein 21A, chloroplastic (167 aa).

Residues M1–K21 lie on the Cytoplasmic side of the membrane. Residues F22–Q31 traverse the membrane as a beta stranded segment. The Chloroplast intermembrane segment spans residues L32–H55. A beta stranded transmembrane segment spans residues E56–L65. Residues H66–E71 lie on the Cytoplasmic side of the membrane. Residues K72–K81 traverse the membrane as a beta stranded segment. The Chloroplast intermembrane portion of the chain corresponds to K82–T87. The beta stranded transmembrane segment at D88 to G97 threads the bilayer. Residues R98–A110 are Cytoplasmic-facing. The beta stranded transmembrane segment at K111 to I120 threads the bilayer. The Chloroplast intermembrane portion of the chain corresponds to W121–Q127. A beta stranded transmembrane segment spans residues D128 to M137. At F138–P142 the chain is on the cytoplasmic side. Residues Y143–T152 form a beta stranded membrane-spanning segment. The Chloroplast intermembrane portion of the chain corresponds to F153–K158. A beta stranded transmembrane segment spans residues G159–L167.

Belongs to the plastid outer envelope porin OEP21 (TC 1.B.29) family.

Its subcellular location is the plastid. It localises to the etioplast membrane. The protein localises to the chloroplast outer membrane. Its function is as follows. Voltage-dependent rectifying anion channel that facilitates the translocation between chloroplast and cytoplasm of phosphorylated carbohydrates such as triosephosphate, 3-phosphoglycerate and inorganic phosphate (Pi) depending of ATP to triosephosphate ratio in the plastidial intermembrane space; in high triosephosphate/ATP conditions (e.g. photosynthesis), export of triosphosphate from chloroplast (outward rectifying channels), but in high ATP/triosephosphate conditions (e.g. dark phase), import of phosphosolutes (inward rectifying channels). The chain is Outer envelope pore protein 21A, chloroplastic (OEP21A) from Arabidopsis thaliana (Mouse-ear cress).